The sequence spans 233 residues: ATP-dependent dethiobiotin synthetase BioD (233 aa).

12–17 contributes to the ATP binding site; the sequence is EVGKTY. T16 is a binding site for Mg(2+). Residue K37 is part of the active site. ATP-binding positions include D54, 120–123, and 186–187; these read EGAG and ND. D54 and E120 together coordinate Mg(2+).

It belongs to the dethiobiotin synthetase family. In terms of assembly, homodimer. The cofactor is Mg(2+).

The protein resides in the cytoplasm. It catalyses the reaction (7R,8S)-7,8-diammoniononanoate + CO2 + ATP = (4R,5S)-dethiobiotin + ADP + phosphate + 3 H(+). Its pathway is cofactor biosynthesis; biotin biosynthesis; biotin from 7,8-diaminononanoate: step 1/2. Catalyzes a mechanistically unusual reaction, the ATP-dependent insertion of CO2 between the N7 and N8 nitrogen atoms of 7,8-diaminopelargonic acid (DAPA, also called 7,8-diammoniononanoate) to form a ureido ring. The chain is ATP-dependent dethiobiotin synthetase BioD from Alteromonas mediterranea (strain DSM 17117 / CIP 110805 / LMG 28347 / Deep ecotype).